Consider the following 383-residue polypeptide: tRNA (guanine(26)-N(2))-dimethyltransferase (383 aa).

The Trm1 methyltransferase domain occupies glutamate 4–leucine 371. Positions 38, 63, 80, 108, and 109 each coordinate S-adenosyl-L-methionine. The Zn(2+) site is built by cysteine 243, cysteine 246, cysteine 258, and cysteine 261.

It belongs to the class I-like SAM-binding methyltransferase superfamily. Trm1 family.

The enzyme catalyses guanosine(26) in tRNA + 2 S-adenosyl-L-methionine = N(2)-dimethylguanosine(26) in tRNA + 2 S-adenosyl-L-homocysteine + 2 H(+). Its function is as follows. Dimethylates a single guanine residue at position 26 of a number of tRNAs using S-adenosyl-L-methionine as donor of the methyl groups. The chain is tRNA (guanine(26)-N(2))-dimethyltransferase from Methanopyrus kandleri (strain AV19 / DSM 6324 / JCM 9639 / NBRC 100938).